Reading from the N-terminus, the 713-residue chain is Polyribonucleotide nucleotidyltransferase (713 aa).

The Mg(2+) site is built by D494 and D500. The KH domain maps to 561–623 (PSFSTMTIPK…EAVQSAEKRV (63 aa)). An S1 motif domain is found at 633 to 702 (GDVYQGTVKS…KSGKYKLSRK (70 aa)).

The protein belongs to the polyribonucleotide nucleotidyltransferase family. Mg(2+) serves as cofactor.

It is found in the cytoplasm. It catalyses the reaction RNA(n+1) + phosphate = RNA(n) + a ribonucleoside 5'-diphosphate. In terms of biological role, involved in mRNA degradation. Catalyzes the phosphorolysis of single-stranded polyribonucleotides processively in the 3'- to 5'-direction. This is Polyribonucleotide nucleotidyltransferase from Amoebophilus asiaticus (strain 5a2).